Consider the following 96-residue polypeptide: uncharacterized protein (96 aa).

An N-terminal signal peptide occupies residues 1–30 (MLILSVFCAVFYAFLTAIVANFSLKTLAIG). At 31-54 (ATFVKSHLKSNPIPYGDLVADSLD) the chain is on the extracellular side. The chain crosses the membrane as a helical span at residues 55 to 75 (FGNITPTVTLLFAILIAVLAL). Residues 76 to 96 (KCEFSCSTSAPAGQASGRKVK) lie on the Cytoplasmic side of the membrane.

It is found in the membrane. This is an uncharacterized protein from Dictyostelium discoideum (Social amoeba).